Here is a 432-residue protein sequence, read N- to C-terminus: Enolase (432 aa).

Residue Gln-163 participates in (2R)-2-phosphoglycerate binding. Glu-205 serves as the catalytic Proton donor. Residues Asp-242, Glu-285, and Asp-312 each contribute to the Mg(2+) site. Residues Lys-337, Arg-366, Ser-367, and Lys-388 each coordinate (2R)-2-phosphoglycerate. Lys-337 serves as the catalytic Proton acceptor.

It belongs to the enolase family. Mg(2+) serves as cofactor.

The protein localises to the cytoplasm. Its subcellular location is the secreted. It is found in the cell surface. It carries out the reaction (2R)-2-phosphoglycerate = phosphoenolpyruvate + H2O. It functions in the pathway carbohydrate degradation; glycolysis; pyruvate from D-glyceraldehyde 3-phosphate: step 4/5. In terms of biological role, catalyzes the reversible conversion of 2-phosphoglycerate (2-PG) into phosphoenolpyruvate (PEP). It is essential for the degradation of carbohydrates via glycolysis. The polypeptide is Enolase (Bifidobacterium longum (strain DJO10A)).